Consider the following 139-residue polypeptide: Large-conductance mechanosensitive channel (139 aa).

3 consecutive transmembrane segments (helical) span residues 16–36, 40–60, and 79–99; these read VIDL…VKAL, IVMP…LAWV, and GAFI…FMLV.

It belongs to the MscL family. In terms of assembly, homopentamer.

It is found in the cell inner membrane. In terms of biological role, channel that opens in response to stretch forces in the membrane lipid bilayer. May participate in the regulation of osmotic pressure changes within the cell. The polypeptide is Large-conductance mechanosensitive channel (Phenylobacterium zucineum (strain HLK1)).